We begin with the raw amino-acid sequence, 1242 residues long: Structural polyprotein (1242 aa).

Residues 1-36 (MFPYPTLNYPPMAPVNPMAYRDPNPPRRRWRPFRPP) are necessary for nucleocapsid assembly and virus assembly. The tract at residues 1-104 (MFPYPTLNYP…KQKPGKRQRM (104 aa)) is disordered. A host transcription inhibition region spans residues 37 to 70 (LAAQIEDLRRSIANLTFKQRAPNPPAGPPAKRKK). The Supraphysiological nuclear export signal signature appears at 44–51 (LRRSIANL). Residues 66-104 (AKRKKPAPKPKPAAPKKKRQPPPAKKQKRKQKPGKRQRM) show a composition bias toward basic residues. The short motif at 67-70 (KRKK) is the Nuclear localization signal element. The segment at 83–113 (KRQPPPAKKQKRKQKPGKRQRMCMKLESDKT) is binding to the viral RNA. The segment at 98–112 (PGKRQRMCMKLESDK) is ribosome-binding. S110 is subject to Phosphoserine. One can recognise a Peptidase S3 domain in the interval 112–261 (KTFPIMLNGQ…KDTPEGSEPW (150 aa)). The residue at position 113 (T113) is a Phosphothreonine. Active-site charge relay system residues include H138, D160, and S212. Residues 262 to 273 (SLTTVMCVLANI) are functions as an uncleaved signal peptide for the precursor of protein E3/E2. N272 carries an N-linked (GlcNAc...) asparagine; by host glycan. Over 325-688 (DLETHFTQYK…YYYNRYPMTT (364 aa)) the chain is Extracellular. The helical transmembrane segment at 689 to 709 (VIGLCTCVAIIMVSCVTSVWL) threads the bilayer. At 710-744 (LCRTRNLCITPYRLAPNAQVPILLAVLCCVKPTRA) the chain is on the cytoplasmic side. 3 S-palmitoyl cysteine; by host lipidation sites follow: C717, C737, and C738. The interval 717-737 (CITPYRLAPNAQVPILLAVLC) is transient transmembrane before p62-6K protein processing. Over 745-759 (DDTLQVLNYLWNNNQ) the chain is Extracellular. Transmembrane regions (helical) follow at residues 760 to 780 (NFFWMQTLIPLAALIVCMRML) and 781 to 801 (RCLLCCGPAFLLVCGALGAAA). Topologically, residues 802 to 1218 (YEHAAVMPNK…WSWLKVLVGS (417 aa)) are extracellular. 8 disulfides stabilise this stretch: C850–C915, C863–C895, C864–C897, C869–C879, C1061–C1073, C1103–C1178, C1108–C1182, and C1130–C1172. The interval 885–902 (VYPFMWGGAYCFCDTENT) is E1 fusion peptide loop. The helical transmembrane segment at 1219–1239 (TSAFIVLGLIATAVVALVLFT) threads the bilayer. Residues 1240-1242 (HRH) are Cytoplasmic-facing.

In terms of assembly, part of a tetrameric complex composed of host CRM1, host importin alpha/beta dimer and the viral capsid; this complex blocks the receptor-mediated transport through the nuclear pore. Interacts with host phosphatase PPP1CA; this interaction dephosphorylates the capsid protein, which increases its ability to bind to the viral genome. Interacts with host karyopherin KPNA4; this interaction allows the nuclear import of the viral capsid protein. Interacts with spike glycoprotein E2. Interacts with host IRAK1; the interaction leads to inhibition of IRAK1-dependent signaling. As to quaternary structure, the precursor of protein E3/E2 and E1 form a heterodimer shortly after synthesis. The precursor of protein E3/E2 and E1 form a heterodimer shortly after synthesis. Processing of the precursor of protein E3/E2 into E2 and E3 results in a heterodimer of the spike glycoproteins E2 and E1. Spike at virion surface are constituted of three E2-E1 heterodimers. After target cell attachment and endocytosis, E1 change conformation to form homotrimers. Interacts with 6K protein. In terms of assembly, processing of the precursor of protein E3/E2 into E2 and E3 results in a heterodimer of the spike glycoproteins E2 and E1. Spike at virion surface are constituted of three E2-E1 heterodimers. Interacts with 6K protein. As to quaternary structure, interacts with spike glycoprotein E1. Interacts with spike glycoprotein E2. In terms of processing, structural polyprotein: Specific enzymatic cleavages in vivo yield mature proteins. Capsid protein is auto-cleaved during polyprotein translation, unmasking a signal peptide at the N-terminus of the precursor of E3/E2. The remaining polyprotein is then targeted to the host endoplasmic reticulum, where host signal peptidase cleaves it into pE2, 6K and E1 proteins. pE2 is further processed to mature E3 and E2 by host furin in trans-Golgi vesicle. Post-translationally, phosphorylated on serine and threonine residues. Palmitoylated via thioester bonds. These palmitoylations may induce disruption of the C-terminus transmembrane. This would result in the reorientation of E2 C-terminus from lumenal to cytoplasmic side. In terms of processing, N-glycosylated. Post-translationally, palmitoylated via thioester bonds.

It is found in the virion. The protein localises to the host cytoplasm. It localises to the host cell membrane. Its subcellular location is the host nucleus. The protein resides in the virion membrane. The enzyme catalyses Autocatalytic release of the core protein from the N-terminus of the togavirus structural polyprotein by hydrolysis of a -Trp-|-Ser- bond.. Its function is as follows. Forms an icosahedral capsid with a T=4 symmetry composed of 240 copies of the capsid protein surrounded by a lipid membrane through which penetrate 80 spikes composed of trimers of E1-E2 heterodimers. The capsid protein binds to the viral RNA genome at a site adjacent to a ribosome binding site for viral genome translation following genome release. Possesses a protease activity that results in its autocatalytic cleavage from the nascent structural protein. Following its self-cleavage, the capsid protein transiently associates with ribosomes, and within several minutes the protein binds to viral RNA and rapidly assembles into icosahedric core particles. The resulting nucleocapsid eventually associates with the cytoplasmic domain of the spike glycoprotein E2 at the cell membrane, leading to budding and formation of mature virions. In case of infection, new virions attach to target cells and after clathrin-mediated endocytosis their membrane fuses with the host endosomal membrane. This leads to the release of the nucleocapsid into the cytoplasm, followed by an uncoating event necessary for the genomic RNA to become accessible. The uncoating might be triggered by the interaction of capsid proteins with ribosomes. Binding of ribosomes would release the genomic RNA since the same region is genomic RNA-binding and ribosome-binding. Specifically inhibits interleukin-1 receptor-associated kinase 1/IRAK1-dependent signaling during viral entry, representing a means by which the alphaviruses may evade innate immune detection and activation prior to viral gene expression. Inhibits host transcription. Forms a tetrameric complex with XPO1/CRM1 and the nuclear import receptor importin. This complex blocks the central channel of host nuclear pores thereby inhibiting the receptor-mediated nuclear transport and thus the host mRNA and rRNA transcription. The inhibition of transcription is linked to a cytopathic effect on the host cell. Functionally, provides the signal sequence for the translocation of the precursor of protein E3/E2 to the host endoplasmic reticulum. Furin-cleaved E3 remains associated with spike glycoprotein E1 and mediates pH protection of the latter during the transport via the secretory pathway. After virion release from the host cell, the assembly protein E3 is gradually released in the extracellular space. Plays a role in viral attachment to target host cell, by binding to the cell receptor. Synthesized as a p62 precursor which is processed by furin at the cell membrane just before virion budding, giving rise to E2-E1 heterodimer. The p62-E1 heterodimer is stable, whereas E2-E1 is unstable and dissociate at low pH. p62 is processed at the last step, presumably to avoid E1 fusion activation before its final export to cell surface. E2 C-terminus contains a transitory transmembrane that would be disrupted by palmitoylation, resulting in reorientation of the C-terminal tail from lumenal to cytoplasmic side. This step is critical since E2 C-terminus is involved in budding by interacting with capsid proteins. This release of E2 C-terminus in cytoplasm occurs lately in protein export, and precludes premature assembly of particles at the endoplasmic reticulum membrane. In terms of biological role, constitutive membrane protein involved in virus glycoprotein processing, cell permeabilization, and the budding of viral particles. Disrupts the calcium homeostasis of the cell, probably at the endoplasmic reticulum level. This leads to cytoplasmic calcium elevation. Because of its lipophilic properties, the 6K protein is postulated to influence the selection of lipids that interact with the transmembrane domains of the glycoproteins, which, in turn, affects the deformability of the bilayer required for the extreme curvature that occurs as budding proceeds. Present in low amount in virions, about 3% compared to viral glycoproteins. Its function is as follows. Class II viral fusion protein. Fusion activity is inactive as long as E1 is bound to E2 in mature virion. After virus attachment to target cell and endocytosis, acidification of the endosome would induce dissociation of E1/E2 heterodimer and concomitant trimerization of the E1 subunits. This E1 trimer is fusion active, and promotes release of viral nucleocapsid in cytoplasm after endosome and viral membrane fusion. Efficient fusion requires the presence of cholesterol and sphingolipid in the target membrane. Fusion is optimal at levels of about 1 molecule of cholesterol per 2 molecules of phospholipids, and is specific for sterols containing a 3-beta-hydroxyl group. The sequence is that of Structural polyprotein from Aedes (Human).